The chain runs to 633 residues: MGQASSQAASGEHSGVKPLGMLVAAVGVVYGDIGTSPLYTLKEVFSGSYGVQVNHDGVFGILALIFWSLVWVVSIKYVLFILRADNQGEGGIMALTALARRASASYPRLRSVLVILGLIGASLFYGDSMITPAISVLSAVEGLELAFSGLEHWVVPLALVVLVALFLIQKHGTDRIGKLFGPVMVAWFLVLGGLGINGILQHPEVLQALNPVWGVRFFIVHPGMGVAILGAVVLALTGAEALYADMGHFGRKPIARAWFALVLPALVLNYFGQGALLLENPEAARNPFYLLAPGWALIPLVVLATLATVIASQAVISGAFSLTRQAIQLGYIPRMHIQHTSSAEQGQIYIGAVNWSLMVGVILLVLGFESSGALASAYGVAVTGTMLITSILVAAVMLLLWKWPPVLAVPVLLGFLLVDGLFFAANVPKIFQGGAFPVLAGIVLFILMTTWKRGKELLVDRLDEGGLPLPIFISSIRVQPPHRVQGTAVFLTARPDAVPHALLHNLLHNQVLHEQVVLLTVVYEDIPRVPANRRFEVDSYGEGFFRVILHFGFTDEPDVPEALKLCHLDELDFSPMRTTYFLSRETVIASKLVGMARWREALFAFMLKNANGNLRFFKLPVNRVIELGTQVEM.

12 helical membrane passes run 19-39 (LGML…SPLY), 61-81 (ILAL…VLFI), 112-132 (VLVI…MITP), 148-168 (SGLE…LFLI), 179-199 (LFGP…INGI), 217-237 (FFIV…LALT), 258-278 (WFAL…ALLL), 290-310 (LLAP…ATVI), 348-368 (IYIG…VLGF), 380-400 (VAVT…MLLL), 405-425 (PVLA…FFAA), and 430-450 (IFQG…LMTT).

The protein belongs to the HAK/KUP transporter (TC 2.A.72) family.

Its subcellular location is the cell inner membrane. It carries out the reaction K(+)(in) + H(+)(in) = K(+)(out) + H(+)(out). Functionally, transport of potassium into the cell. Likely operates as a K(+):H(+) symporter. The chain is Probable potassium transport system protein Kup from Pseudomonas fluorescens (strain ATCC BAA-477 / NRRL B-23932 / Pf-5).